The chain runs to 1072 residues: Carbamoyl phosphate synthase large chain (1072 aa).

Residues 1 to 401 are carboxyphosphate synthetic domain; sequence MPKYKDISKV…SLLKAVRSLE (401 aa). Residues arginine 129, arginine 169, glycine 175, glycine 176, lysine 208, leucine 210, glutamate 215, glycine 241, valine 242, histidine 243, glutamine 284, and glutamate 298 each contribute to the ATP site. In terms of domain architecture, ATP-grasp 1 spans 133–327; the sequence is KRKMQEIGEP…IAKIAAKIAI (195 aa). Residues glutamine 284, glutamate 298, and asparagine 300 each contribute to the Mg(2+) site. 3 residues coordinate Mn(2+): glutamine 284, glutamate 298, and asparagine 300. The segment at 402–544 is oligomerization domain; sequence IKAYGLRLDS…YIYSTYCEED (143 aa). The segment at 545–929 is carbamoyl phosphate synthetic domain; sequence EVETHDIPKV…ALYKALEGAG (385 aa). The ATP-grasp 2 domain maps to 671–861; the sequence is SKLLKELNIN…MVKLAVEVAL (191 aa). The ATP site is built by arginine 707, lysine 746, isoleucine 748, glutamate 752, glycine 777, valine 778, histidine 779, serine 780, glutamine 820, and glutamate 832. Residues glutamine 820, glutamate 832, and asparagine 834 each contribute to the Mg(2+) site. Mn(2+)-binding residues include glutamine 820, glutamate 832, and asparagine 834. An MGS-like domain is found at 930-1072; the sequence is LKIPKKGKIL…QKDNVKNLVL (143 aa). The tract at residues 930–1072 is allosteric domain; sequence LKIPKKGKIL…QKDNVKNLVL (143 aa).

The protein belongs to the CarB family. Composed of two chains; the small (or glutamine) chain promotes the hydrolysis of glutamine to ammonia, which is used by the large (or ammonia) chain to synthesize carbamoyl phosphate. Tetramer of heterodimers (alpha,beta)4. Requires Mg(2+) as cofactor. It depends on Mn(2+) as a cofactor.

The enzyme catalyses hydrogencarbonate + L-glutamine + 2 ATP + H2O = carbamoyl phosphate + L-glutamate + 2 ADP + phosphate + 2 H(+). The catalysed reaction is hydrogencarbonate + NH4(+) + 2 ATP = carbamoyl phosphate + 2 ADP + phosphate + 2 H(+). The protein operates within amino-acid biosynthesis; L-arginine biosynthesis; carbamoyl phosphate from bicarbonate: step 1/1. It functions in the pathway pyrimidine metabolism; UMP biosynthesis via de novo pathway; (S)-dihydroorotate from bicarbonate: step 1/3. In terms of biological role, large subunit of the glutamine-dependent carbamoyl phosphate synthetase (CPSase). CPSase catalyzes the formation of carbamoyl phosphate from the ammonia moiety of glutamine, carbonate, and phosphate donated by ATP, constituting the first step of 2 biosynthetic pathways, one leading to arginine and/or urea and the other to pyrimidine nucleotides. The large subunit (synthetase) binds the substrates ammonia (free or transferred from glutamine from the small subunit), hydrogencarbonate and ATP and carries out an ATP-coupled ligase reaction, activating hydrogencarbonate by forming carboxy phosphate which reacts with ammonia to form carbamoyl phosphate. This is Carbamoyl phosphate synthase large chain from Caldanaerobacter subterraneus subsp. tengcongensis (strain DSM 15242 / JCM 11007 / NBRC 100824 / MB4) (Thermoanaerobacter tengcongensis).